The following is a 230-amino-acid chain: Orotidine 5'-phosphate decarboxylase (230 aa).

Substrate contacts are provided by residues aspartate 10, lysine 32, aspartate 59–threonine 68, threonine 119, arginine 180, glutamine 189, glycine 209, and arginine 210. Catalysis depends on lysine 61, which acts as the Proton donor.

The protein belongs to the OMP decarboxylase family. Type 1 subfamily. Homodimer.

The catalysed reaction is orotidine 5'-phosphate + H(+) = UMP + CO2. It participates in pyrimidine metabolism; UMP biosynthesis via de novo pathway; UMP from orotate: step 2/2. Its function is as follows. Catalyzes the decarboxylation of orotidine 5'-monophosphate (OMP) to uridine 5'-monophosphate (UMP). This Haemophilus influenzae (strain PittEE) protein is Orotidine 5'-phosphate decarboxylase.